The chain runs to 408 residues: Imidazolonepropionase (408 aa).

Fe(3+)-binding residues include His73 and His75. Zn(2+) contacts are provided by His73 and His75. The 4-imidazolone-5-propanoate site is built by Arg82, Tyr145, and His178. Tyr145 is an N-formimidoyl-L-glutamate binding site. His243 serves as a coordination point for Fe(3+). His243 contacts Zn(2+). Residue Gln246 coordinates 4-imidazolone-5-propanoate. Asp318 is a Fe(3+) binding site. Residue Asp318 coordinates Zn(2+). N-formimidoyl-L-glutamate is bound by residues Asn320 and Gly322. Residue Ser323 coordinates 4-imidazolone-5-propanoate.

Belongs to the metallo-dependent hydrolases superfamily. HutI family. The cofactor is Zn(2+). Fe(3+) serves as cofactor.

Its subcellular location is the cytoplasm. The enzyme catalyses 4-imidazolone-5-propanoate + H2O = N-formimidoyl-L-glutamate. It functions in the pathway amino-acid degradation; L-histidine degradation into L-glutamate; N-formimidoyl-L-glutamate from L-histidine: step 3/3. In terms of biological role, catalyzes the hydrolytic cleavage of the carbon-nitrogen bond in imidazolone-5-propanoate to yield N-formimidoyl-L-glutamate. It is the third step in the universal histidine degradation pathway. This Shewanella putrefaciens (strain CN-32 / ATCC BAA-453) protein is Imidazolonepropionase.